The primary structure comprises 413 residues: Gamma-glutamyl phosphate reductase (413 aa).

Belongs to the gamma-glutamyl phosphate reductase family.

It is found in the cytoplasm. It catalyses the reaction L-glutamate 5-semialdehyde + phosphate + NADP(+) = L-glutamyl 5-phosphate + NADPH + H(+). It functions in the pathway amino-acid biosynthesis; L-proline biosynthesis; L-glutamate 5-semialdehyde from L-glutamate: step 2/2. Functionally, catalyzes the NADPH-dependent reduction of L-glutamate 5-phosphate into L-glutamate 5-semialdehyde and phosphate. The product spontaneously undergoes cyclization to form 1-pyrroline-5-carboxylate. This Salinispora arenicola (strain CNS-205) protein is Gamma-glutamyl phosphate reductase.